The primary structure comprises 174 residues: U1 small nuclear ribonucleoprotein C (174 aa).

Residues 4–36 form a Matrin-type zinc finger; it reads YYCDYCDKYLTHDSPSVRKSHTVGKQHKLAVQL. Low complexity-rich tracts occupy residues 82-109 and 122-140; these read QQQQQQQQQQGILPFQGMQPPPHQQQGM and PHQFNNNNNPHQQHSFQPP. A disordered region spans residues 82-174; sequence QQQQQQQQQQ…QHNQPTIPGL (93 aa). Over residues 141–163 the composition is skewed to basic residues; that stretch reads HHQHHPHQQHQQHQQHQHQHQHQ. The span at 164-174 shows a compositional bias: low complexity; the sequence is QQHNQPTIPGL.

It belongs to the U1 small nuclear ribonucleoprotein C family. In terms of assembly, component of the U1 snRNP. The U1 snRNP is composed of the U1 snRNA and the 7 core Sm proteins SNRPB, SNRPD1, SNRPD2, SNRPD3, SNRPE, SNRPF and SNRPG that assemble in a heptameric protein ring on the Sm site of the small nuclear RNA to form the core snRNP, and at least 3 U1 snRNP-specific proteins SNRNP70/U1-70K, SNRPA/U1-A and SNRPC/U1-C. SNRPC/U1-C interacts with U1 snRNA and the 5' splice-site region of the pre-mRNA.

It localises to the nucleus. Its function is as follows. Component of the spliceosomal U1 snRNP, which is essential for recognition of the pre-mRNA 5' splice-site and the subsequent assembly of the spliceosome. SNRPC/U1-C is directly involved in initial 5' splice-site recognition for both constitutive and regulated alternative splicing. The interaction with the 5' splice-site seems to precede base-pairing between the pre-mRNA and the U1 snRNA. Stimulates commitment or early (E) complex formation by stabilizing the base pairing of the 5' end of the U1 snRNA and the 5' splice-site region. The chain is U1 small nuclear ribonucleoprotein C from Dictyostelium discoideum (Social amoeba).